We begin with the raw amino-acid sequence, 492 residues long: Catalase isozyme 2 (492 aa).

Residues His65 and Asn138 contribute to the active site. A heme-binding site is contributed by Tyr348.

It belongs to the catalase family. Homotetramer. The cofactor is heme.

It localises to the peroxisome. Its subcellular location is the glyoxysome. It carries out the reaction 2 H2O2 = O2 + 2 H2O. Its function is as follows. Occurs in almost all aerobically respiring organisms and serves to protect cells from the toxic effects of hydrogen peroxide. The polypeptide is Catalase isozyme 2 (CAT2) (Solanum tuberosum (Potato)).